Consider the following 228-residue polypeptide: F-box protein At5g67140 (228 aa).

An F-box domain is found at 4-51 (EAAIDRLPLDLLAYIFSLATSFTVLAQASGVCKKWRKAVNQSMARRET).

This Arabidopsis thaliana (Mouse-ear cress) protein is F-box protein At5g67140.